A 149-amino-acid chain; its full sequence is Large ribosomal subunit protein bL9 (149 aa).

The protein belongs to the bacterial ribosomal protein bL9 family.

Functionally, binds to the 23S rRNA. This is Large ribosomal subunit protein bL9 from Salmonella dublin (strain CT_02021853).